Consider the following 71-residue polypeptide: Small ribosomal subunit protein bS21 (71 aa).

Positions 49–59 are enriched in basic residues; it reads AAAAVKRHAKK. Positions 49–71 are disordered; it reads AAAAVKRHAKKVQREQRRSVRLY. Basic and acidic residues predominate over residues 60 to 71; the sequence is VQREQRRSVRLY.

It belongs to the bacterial ribosomal protein bS21 family.

The sequence is that of Small ribosomal subunit protein bS21 from Stutzerimonas stutzeri (strain A1501) (Pseudomonas stutzeri).